A 495-amino-acid polypeptide reads, in one-letter code: UDP-N-acetylmuramoyl-L-alanyl-D-glutamate--2,6-diaminopimelate ligase (495 aa).

Residues Leu27, Ser29, and 44–46 (HKA) each bind UDP-N-acetyl-alpha-D-muramoyl-L-alanyl-D-glutamate. Position 116–122 (116–122 (GTNGKTT)) interacts with ATP. UDP-N-acetyl-alpha-D-muramoyl-L-alanyl-D-glutamate-binding positions include Asn157, 158–159 (TT), Ser185, Gln191, and Arg193. The residue at position 225 (Lys225) is an N6-carboxylysine. Meso-2,6-diaminopimelate-binding positions include Arg390, 414–417 (DNPR), Gly465, and Glu469. Positions 414 to 417 (DNPR) match the Meso-diaminopimelate recognition motif motif.

Belongs to the MurCDEF family. MurE subfamily. Requires Mg(2+) as cofactor. In terms of processing, carboxylation is probably crucial for Mg(2+) binding and, consequently, for the gamma-phosphate positioning of ATP.

The protein localises to the cytoplasm. It carries out the reaction UDP-N-acetyl-alpha-D-muramoyl-L-alanyl-D-glutamate + meso-2,6-diaminopimelate + ATP = UDP-N-acetyl-alpha-D-muramoyl-L-alanyl-gamma-D-glutamyl-meso-2,6-diaminopimelate + ADP + phosphate + H(+). It participates in cell wall biogenesis; peptidoglycan biosynthesis. Catalyzes the addition of meso-diaminopimelic acid to the nucleotide precursor UDP-N-acetylmuramoyl-L-alanyl-D-glutamate (UMAG) in the biosynthesis of bacterial cell-wall peptidoglycan. In Pectobacterium atrosepticum (strain SCRI 1043 / ATCC BAA-672) (Erwinia carotovora subsp. atroseptica), this protein is UDP-N-acetylmuramoyl-L-alanyl-D-glutamate--2,6-diaminopimelate ligase.